A 122-amino-acid polypeptide reads, in one-letter code: Large ribosomal subunit protein uL14 (122 aa).

This sequence belongs to the universal ribosomal protein uL14 family. As to quaternary structure, part of the 50S ribosomal subunit. Forms a cluster with proteins L3 and L19. In the 70S ribosome, L14 and L19 interact and together make contacts with the 16S rRNA in bridges B5 and B8.

Functionally, binds to 23S rRNA. Forms part of two intersubunit bridges in the 70S ribosome. The sequence is that of Large ribosomal subunit protein uL14 from Thermosipho melanesiensis (strain DSM 12029 / CIP 104789 / BI429).